The sequence spans 1016 residues: Rho family-interacting cell polarization regulator 2 (1016 aa).

Serine 21 and serine 37 each carry phosphoserine. The segment at alanine 44 to arginine 73 is disordered. A compositionally biased stretch (basic residues) spans proline 48–glycine 59. Residues methionine 55–glycine 113 form an involved in cell filopodia formation region. A coiled-coil region spans residues leucine 85–leucine 112. The residue at position 341 (serine 341) is a Phosphoserine. A compositionally biased stretch (polar residues) spans threonine 414–glutamate 428. Residues threonine 414 to threonine 469 are disordered. Over residues serine 433–serine 442 the composition is skewed to low complexity. A compositionally biased stretch (basic and acidic residues) spans glutamate 444–glycine 454. Serine 520 and serine 532 each carry phosphoserine. Residues aspartate 636–alanine 656 form a disordered region. A compositionally biased stretch (basic and acidic residues) spans glutamate 643–alanine 656.

Belongs to the RIPOR family. In terms of assembly, homooligomer; homooligomerization is regulated by RHOC and leads to the formation of concatemers through the association of N- and C-termini. Interacts (phosphorylated form) with 14-3-3 proteins; these interactions occur during myogenic cell differentiation and also induces T cell proliferation arrest. Interacts (phosphorylated form) with HDAC6; this interaction occurs during early myogenic differentiation, prevents HDAC6 to deacetylate tubulin and also induces T cell proliferation arrest. Interacts with DYSF; this interaction occurs during early myogenic differentiation. Interacts with MYOF. Interacts (via active GTP- or inactive GDP-bound forms) with RHOA; this interaction is direct, blocks the loading of GTP to RHOA and decreases upon chemokine CCL19 stimulation in primary T lymphocytes. Interacts with RHOC. Interacts (via phosphorylated form) with YWHAB; this interaction occurs in a chemokine-dependent manner and does not compete for binding of RIPOR2 with RHOA nor blocks inhibition of RIPOR2-mediated RHOA activity. Interacts with YWHAE. Interacts with YWHAQ. Phosphorylated. Chemokine-induced phosphorylation in neutrophils occurs in a PKC- and AKT-dependent manner, resulting in RIPOR2 interaction with YWHAB and stabilization. Phosphorylated by PKCA, AKT1 and MAPKAPK1A; in vitro.

It is found in the cytoplasm. It localises to the cytoskeleton. Its subcellular location is the cell projection. The protein localises to the filopodium. The protein resides in the apical cell membrane. It is found in the stereocilium. It localises to the stereocilium membrane. Functionally, acts as an inhibitor of the small GTPase RHOA and plays several roles in the regulation of myoblast and hair cell differentiation, lymphocyte T proliferation and neutrophil polarization. Plays a role in fetal mononuclear myoblast differentiation by promoting filopodia and myotube formation. Maintains naive T lymphocytes in a quiescent state and prevents chemokine-induced T lymphocyte responses, such as cell adhesion, polarization and migration. Involved also in the regulation of neutrophil polarization, chemotaxis and adhesion. Required for normal development of inner and outer hair cell stereocilia within the cochlea of the inner ear. Plays a role for maintaining the structural organization of the basal domain of stereocilia. Involved in mechanosensory hair cell function. Required for normal hearing. The sequence is that of Rho family-interacting cell polarization regulator 2 from Bos taurus (Bovine).